The following is a 189-amino-acid chain: Mu-like prophage FluMu protein gp27 (189 aa).

It to phage Mu protein gp27.

This is Mu-like prophage FluMu protein gp27 from Haemophilus influenzae (strain ATCC 51907 / DSM 11121 / KW20 / Rd).